Consider the following 205-residue polypeptide: Putative 3-methyladenine DNA glycosylase (205 aa).

Belongs to the DNA glycosylase MPG family.

The chain is Putative 3-methyladenine DNA glycosylase from Mycolicibacterium paratuberculosis (strain ATCC BAA-968 / K-10) (Mycobacterium paratuberculosis).